Consider the following 566-residue polypeptide: Putative UDP-glucuronate:xylan alpha-glucuronosyltransferase 5 (566 aa).

The helical; Signal-anchor for type II membrane protein transmembrane segment at 17–37 (LILISLSFLGLLLNFKPLFLL) threads the bilayer. Residues aspartate 372 and aspartate 374 each contribute to the Mn(2+) site. Substrate-binding positions include 372 to 374 (DAD), 401 to 403 (NSG), 428 to 432 (NGGDQ), and 475 to 480 (HYLGLK). Mn(2+) is bound at residue histidine 475.

This sequence belongs to the glycosyltransferase 8 family. Glycogenin subfamily. Mn(2+) is required as a cofactor.

The protein localises to the golgi apparatus membrane. Functionally, may be involved in the substitutions of the xylan backbone in stem glucuronoxylan. This Arabidopsis thaliana (Mouse-ear cress) protein is Putative UDP-glucuronate:xylan alpha-glucuronosyltransferase 5 (GUX5).